A 253-amino-acid polypeptide reads, in one-letter code: Solute carrier family 66 member 2 (253 aa).

6 helical membrane passes run 7-27 (GWLLVPLHQLVSWGAAGAMVF), 49-69 (FSTYVCLVLLVANILRILFWF), 72-92 (HFESPLLWQSVVMILTMLLML), 125-145 (FADYVQCVLAFTGVAGYITYL), 150-170 (ALFVETLGFLAVLTEAMLGVP), and 214-234 (VCGLLQVLVDLAILGQAYVFT). A PQ-loop 1 domain is found at 14-80 (HQLVSWGAAG…RHFESPLLWQ (67 aa)). The region spanning 160 to 215 (AVLTEAMLGVPQLYRNHRHQSTEGMSIKMVLMWTSGDTFKTAYFLLNGAPLQFSVC) is the PQ-loop 2 domain.

It is found in the membrane. The chain is Solute carrier family 66 member 2 (SLC66A2) from Bos taurus (Bovine).